The chain runs to 673 residues: Putative potassium transport system protein Kup 1 (673 aa).

A run of 13 helical transmembrane segments spans residues 14-34, 58-78, 101-121, 147-167, 175-195, 196-216, 220-240, 252-272, 294-314, 345-365, 374-394, 403-423, and 427-447; these read GAGFIIAMGIVYGDIGTSPLY, LSLIIWTLTLITTVKYVWIAL, WLIIPAMIGGAALLSDGALTP, LPIVIITLAILAILFLIQRFG, FGPVMFIWFSFLGITGLINLF, GDFSVLQAINPYWAIHLLLSP, AGIFVLGSVFLATTGAEALYS, VSWPFVKVCIILSYCGQAAWL, LIIFSVVLATLAAIIASQALI, LYIPAVNLGLWLAASFIVVYF, AYGLAITVTMLMTTILLTVYL, VFVVLFFGAFIFIEGLFFAAS, and FLHGGYVVVILAALILFVMAI.

It belongs to the HAK/KUP transporter (TC 2.A.72) family.

It is found in the cell membrane. The enzyme catalyses K(+)(in) + H(+)(in) = K(+)(out) + H(+)(out). Transport of potassium into the cell. Likely operates as a K(+):H(+) symporter. The protein is Putative potassium transport system protein Kup 1 of Lactococcus lactis subsp. cremoris (strain MG1363).